We begin with the raw amino-acid sequence, 236 residues long: uncharacterized protein (236 aa).

An HTH gntR-type domain is found at 7–74 (RTNRRDIYLK…PKIGSFVSRV (68 aa)). A DNA-binding region (H-T-H motif) is located at residues 34–53 (ENELAASMGVSRTPVRESLI).

This is an uncharacterized protein from Streptomyces ambofaciens.